The primary structure comprises 185 residues: Ribosome-recycling factor (185 aa).

It belongs to the RRF family.

It localises to the cytoplasm. Responsible for the release of ribosomes from messenger RNA at the termination of protein biosynthesis. May increase the efficiency of translation by recycling ribosomes from one round of translation to another. The protein is Ribosome-recycling factor of Chromohalobacter salexigens (strain ATCC BAA-138 / DSM 3043 / CIP 106854 / NCIMB 13768 / 1H11).